Consider the following 189-residue polypeptide: Elongation factor P (189 aa).

At Lys34 the chain carries N6-(3,6-diaminohexanoyl)-5-hydroxylysine.

The protein belongs to the elongation factor P family. May be beta-lysylated on the epsilon-amino group of Lys-34 by the combined action of EpmA and EpmB, and then hydroxylated on the C5 position of the same residue by EpmC (if this protein is present). Lysylation is critical for the stimulatory effect of EF-P on peptide-bond formation. The lysylation moiety may extend toward the peptidyltransferase center and stabilize the terminal 3-CCA end of the tRNA. Hydroxylation of the C5 position on Lys-34 may allow additional potential stabilizing hydrogen-bond interactions with the P-tRNA.

The protein resides in the cytoplasm. The protein operates within protein biosynthesis; polypeptide chain elongation. In terms of biological role, involved in peptide bond synthesis. Alleviates ribosome stalling that occurs when 3 or more consecutive Pro residues or the sequence PPG is present in a protein, possibly by augmenting the peptidyl transferase activity of the ribosome. Modification of Lys-34 is required for alleviation. The sequence is that of Elongation factor P from Baumannia cicadellinicola subsp. Homalodisca coagulata.